The following is a 110-amino-acid chain: MYKKGTILVLAYLLIATAVCQLSYKEGHCPLRNSVSKCIPRCVSDYQCSFNEKCCPNKCGSESCVQASPINTGNGYKGSNDDVYCAGVKCGPYEKCQFDRKTKREKCVRT.

A signal peptide spans 1–20 (MYKKGTILVLAYLLIATAVC). The WAP domain maps to 22 to 68 (LSYKEGHCPLRNSVSKCIPRCVSDYQCSFNEKCCPNKCGSESCVQAS). Intrachain disulfides connect C29–C55, C38–C59, C42–C54, and C48–C64.

Belongs to the venom waprin family. Cys-rich waprin subfamily. In terms of tissue distribution, expressed by the venom gland.

It localises to the secreted. In terms of biological role, antimicrobial peptides with activity against Gram-positive and Gram-negative bacteria as well as fungi. Recognizes carbohydrates in the microbial cell walls, and induces structural damage to them. Also inhibits microbial serine proteases subtilisin A and proteinase K, as well as human and porcine elastases. Carbohydrates that are recognized are LPS, mannan, peptidoglycan, and N-acetl-D-glucosamine. In Apis mellifera (Honeybee), this protein is Waprin-Thr1.